Here is a 765-residue protein sequence, read N- to C-terminus: Palmitoyltransferase ZDHHC8 (765 aa).

Over 1 to 13 the chain is Cytoplasmic; the sequence is MPRSPGTRLKPAK. A helical membrane pass occupies residues 14–34; the sequence is YIPVATAAALLVGSSTLFFVF. Residues 35 to 52 lie on the Lumenal side of the membrane; it reads TCPWLTRAVSPAVPVYNG. A helical membrane pass occupies residues 53 to 73; sequence IIFLFVLANFSMATFMDPGVF. Residues 74–148 are Cytoplasmic-facing; sequence PRADEDEDKE…NCIGRRNYRY (75 aa). The 51-residue stretch at 104–154 folds into the DHHC domain; it reads KWCATCHFYRPPRCSHCSVCDNCVEDFDHHCPWVNNCIGRRNYRYFFLFLL. Cys134 (S-palmitoyl cysteine intermediate) is an active-site residue. Residues 149–169 form a helical membrane-spanning segment; that stretch reads FFLFLLSLSAHMVGVVAFGLV. Over 170 to 190 the chain is Lumenal; the sequence is YVLNHAEGLGAAHTTITMAVM. A helical transmembrane segment spans residues 191–211; it reads CVAGLFFIPVIGLTGFHVVLV. Over 212–765 the chain is Cytoplasmic; that stretch reads TRGRTTNEQV…VGGTTYEISV (554 aa). Residues 293 to 352 are disordered; it reads GLGRSKSKGSLDRLDEKPLDLGPPLPPKIEAGTFSSDLQTPRPGSAESALSVQRTSPPTP. Basic and acidic residues predominate over residues 301–311; it reads GSLDRLDEKPL. A Phosphoserine modification is found at Ser337. Omega-N-methylarginine is present on Arg441. The disordered stretch occupies residues 509–540; that stretch reads LHPGATGDPPRPLPRSFSPVLGPRPREPSPVR. 5 positions are modified to phosphoserine: Ser606, Ser627, Ser675, Ser725, and Ser743. Residues 613 to 746 are disordered; sequence GPGFGGARNP…PPGPSASPTR (134 aa). Residues 622-653 show a composition bias toward low complexity; the sequence is PALQTSLSSLSSSVSRAPRTSSSSLQADQASS.

This sequence belongs to the DHHC palmitoyltransferase family. ERF2/ZDHHC9 subfamily.

The protein localises to the golgi apparatus membrane. Its subcellular location is the mitochondrion membrane. The enzyme catalyses L-cysteinyl-[protein] + hexadecanoyl-CoA = S-hexadecanoyl-L-cysteinyl-[protein] + CoA. Palmitoyltransferase that catalyzes the addition of palmitate onto various protein substrates and therefore functions in several unrelated biological processes. Through the palmitoylation of ABCA1 regulates the localization of the transporter to the plasma membrane and thereby regulates its function in cholesterol and phospholipid efflux. Could also pamitoylate the D(2) dopamine receptor DRD2 and regulate its stability and localization to the plasma membrane. Could also play a role in glutamatergic transmission. The protein is Palmitoyltransferase ZDHHC8 of Pan troglodytes (Chimpanzee).